The following is a 319-amino-acid chain: tRNA uridine(34) hydroxylase (319 aa).

Residues 127-221 enclose the Rhodanese domain; it reads KQEDTVIIDA…YGKDPEVQGE (95 aa). Cysteine 181 functions as the Cysteine persulfide intermediate in the catalytic mechanism.

It belongs to the TrhO family.

The enzyme catalyses uridine(34) in tRNA + AH2 + O2 = 5-hydroxyuridine(34) in tRNA + A + H2O. Functionally, catalyzes oxygen-dependent 5-hydroxyuridine (ho5U) modification at position 34 in tRNAs. This is tRNA uridine(34) hydroxylase from Bacillus cereus (strain Q1).